Consider the following 730-residue polypeptide: Meiotically up-regulated gene 70 protein (730 aa).

Residues Met-1–Gln-27 form a disordered region. Residues Ser-7–Val-20 are compositionally biased toward low complexity. 4 consecutive CBS domains span residues Ala-69 to Arg-127, Met-135 to Arg-200, Ser-263 to Pro-319, and Met-328 to Glu-385. Transmembrane regions (helical) follow at residues Ala-290 to Leu-310 and Val-358 to Ile-378. Residues Glu-420 to Ser-517 form a disordered region. Polar residues-rich tracts occupy residues Ala-458 to Pro-470 and Tyr-480 to Ala-515. The PB1 domain occupies Pro-572–Glu-649. The helical transmembrane segment at Pro-706 to Leu-726 threads the bilayer.

The protein localises to the cytoplasm. Its subcellular location is the nucleus membrane. In terms of biological role, has a role in meiosis. This chain is Meiotically up-regulated gene 70 protein (mug70), found in Schizosaccharomyces pombe (strain 972 / ATCC 24843) (Fission yeast).